Consider the following 34-residue polypeptide: Photosystem I reaction center subunit XII (34 aa).

The helical transmembrane segment at 9–29 (LIALSLIVVVHAGVLALRLGI) threads the bilayer.

Belongs to the PsaM family.

The protein localises to the cellular thylakoid membrane. The chain is Photosystem I reaction center subunit XII from Prochlorococcus marinus (strain MIT 9312).